The following is a 757-amino-acid chain: Polyribonucleotide nucleotidyltransferase (757 aa).

2 residues coordinate Mg(2+): Asp-525 and Asp-531. The region spanning 591–650 (PRVISVNIPVDKIGELIGPKGKTINAIQDETGADISIEEDGTVYIGAVDGPSADAARAQV) is the KH domain. One can recognise an S1 motif domain in the interval 662 to 734 (GESFLGTVVK…DRGKLSLAPV (73 aa)). The segment at 737-757 (ETADQEGRDAASHGSEAPAEG) is disordered.

Belongs to the polyribonucleotide nucleotidyltransferase family. Requires Mg(2+) as cofactor.

It localises to the cytoplasm. The enzyme catalyses RNA(n+1) + phosphate = RNA(n) + a ribonucleoside 5'-diphosphate. Its function is as follows. Involved in mRNA degradation. Catalyzes the phosphorolysis of single-stranded polyribonucleotides processively in the 3'- to 5'-direction. The sequence is that of Polyribonucleotide nucleotidyltransferase from Clavibacter michiganensis subsp. michiganensis (strain NCPPB 382).